The primary structure comprises 163 residues: Protein LOL5 (163 aa).

2 stretches are compositionally biased toward polar residues: residues 1–25 (MSQLPLASQATTTDLVSTTAMQPQS) and 33–44 (LQPQHPPSSTAH). The interval 1–51 (MSQLPLASQATTTDLVSTTAMQPQSEGIVDESLQPQHPPSSTAHDSPCLQD) is disordered. 2 putative zinc finger regions span residues 70 to 100 (QMVCGSCRILLAYFRGAGYVHCTCCQTMNYV) and 108 to 138 (KVHCGHCATLLMYPFGAPAVKCSLCLFVTEI).

The protein localises to the nucleus. Involved in plant growth and disease resistance. This is Protein LOL5 (LOL5) from Oryza sativa subsp. japonica (Rice).